The following is a 208-amino-acid chain: N-(5'-phosphoribosyl)anthranilate isomerase (208 aa).

It belongs to the TrpF family.

The enzyme catalyses N-(5-phospho-beta-D-ribosyl)anthranilate = 1-(2-carboxyphenylamino)-1-deoxy-D-ribulose 5-phosphate. It participates in amino-acid biosynthesis; L-tryptophan biosynthesis; L-tryptophan from chorismate: step 3/5. The sequence is that of N-(5'-phosphoribosyl)anthranilate isomerase from Neisseria gonorrhoeae (strain NCCP11945).